The sequence spans 619 residues: Cationic amino acid transporter 3 (619 aa).

The Cytoplasmic segment spans residues 1–36 (MPWQAFRRFGQKLVRRRTLESGMAETRLARCLSTLD). Residues 37–57 (LVALGVGSTLGAGVYVLAGEV) traverse the membrane as a helical segment. The Extracellular portion of the chain corresponds to 58-61 (AKDK). Residues 62–82 (AGPSIVICFLVAALSSVLAGL) form a helical membrane-spanning segment. Residues 83–107 (CYAEFGARVPRSGSAYLYSYVTVGE) are Cytoplasmic-facing. Residues 108–128 (LWAFTTGWNLILSYVIGTASV) form a helical membrane-spanning segment. Topologically, residues 129–162 (ARAWSSAFDNLIGNHISKTLQGSIALHVPHVLAE) are extracellular. A helical transmembrane segment spans residues 163–183 (YPDFFALGLVLLLTGLLALGA). The Cytoplasmic portion of the chain corresponds to 184–191 (SESALVTK). A helical transmembrane segment spans residues 192–212 (VFTGVNLLVLGFVMISGFVKG). Over 213 to 233 (DVHNWKLTEEDYELAMAELND) the chain is Extracellular. Asn-232 carries an N-linked (GlcNAc...) asparagine glycan. The helical transmembrane segment at 234-254 (TYSLGPLGSGGFVPFGFEGIL) threads the bilayer. Topologically, residues 255-285 (RGAATCFYAFVGFDCIATTGEEAQNPQRSIP) are cytoplasmic. Residues 286–306 (MGIVISLSVCFLAYFAVSSAL) traverse the membrane as a helical segment. The Extracellular segment spans residues 307-335 (TLMMPYYQLQPESPLPEAFLYIGWAPARY). Residues 336-356 (VVAVGSLCALSTSLLGSMFPM) form a helical membrane-spanning segment. The Cytoplasmic segment spans residues 357–382 (PRVIYAMAEDGLLFRVLARIHTGTRT). Residues 383-403 (PIIATVVSGIIAAFMAFLFKL) traverse the membrane as a helical segment. Over 404-406 (TDL) the chain is Extracellular. A helical membrane pass occupies residues 407–427 (VDLMSIGTLLAYSLVSICVLI). Residues 428 to 475 (LRYQPDQETKTGEEVELQEEAITTESEKLTLWGLFFPLNSIPTPLSGQ) are Cytoplasmic-facing. Residues 476–496 (IVYVCSSLLAVLLTALCLVLA) traverse the membrane as a helical segment. The Extracellular segment spans residues 497–506 (QWSVPLLSGD). The chain crosses the membrane as a helical span at residues 507 to 527 (LLWTAVVVLLLLLIIGIIVVI). Topologically, residues 528-540 (WRQPQSSTPLHFK) are cytoplasmic. The helical transmembrane segment at 541–561 (VPALPLLPLMSIFVNIYLMMQ) threads the bilayer. Residues 562-569 (MTAGTWAR) lie on the Extracellular side of the membrane. The chain crosses the membrane as a helical span at residues 570-590 (FGVWMLIGFAIYFGYGIQHSL). The Cytoplasmic segment spans residues 591-619 (EEIKSNQPSRKSRAKTVDLDPGTLYVHSV). Residue Thr-606 is modified to Phosphothreonine. Residue Ser-618 is modified to Phosphoserine.

It belongs to the amino acid-polyamine-organocation (APC) superfamily. Cationic amino acid transporter (CAT) (TC 2.A.3.3) family. Post-translationally, N-glycosylated. In terms of tissue distribution, highly expressed in thymus, uterus and testis. Detected at lower levels in brain, mammary gland, prostate, salivary gland and fetal spleen. In brain, highest expression in thalamus, hippocampus and amygdala.

The protein localises to the cell membrane. It carries out the reaction L-arginine(in) = L-arginine(out). The enzyme catalyses L-lysine(in) = L-lysine(out). It catalyses the reaction L-ornithine(in) = L-ornithine(out). Uniporter that mediates the uptake of cationic L-amino acids such as L-arginine, L-lysine and L-ornithine. The transport is sodium ions- and pH-independent, moderately trans-stimulated and is mediated by passive diffusion. The sequence is that of Cationic amino acid transporter 3 from Homo sapiens (Human).